Consider the following 487-residue polypeptide: Cysteine--tRNA ligase (487 aa).

Cys-29 contacts Zn(2+). The 'HIGH' region motif lies at 31–41 (VTVYDFCHIGH). Zn(2+) is bound by residues Cys-209, His-234, and Glu-238. The short motif at 266–270 (KMSKS) is the 'KMSKS' region element. Lys-269 provides a ligand contact to ATP.

Belongs to the class-I aminoacyl-tRNA synthetase family. As to quaternary structure, monomer. The cofactor is Zn(2+).

Its subcellular location is the cytoplasm. It catalyses the reaction tRNA(Cys) + L-cysteine + ATP = L-cysteinyl-tRNA(Cys) + AMP + diphosphate. The polypeptide is Cysteine--tRNA ligase (Trichlorobacter lovleyi (strain ATCC BAA-1151 / DSM 17278 / SZ) (Geobacter lovleyi)).